A 340-amino-acid chain; its full sequence is Sulfotransferase ppzF (340 aa).

The protein operates within secondary metabolite biosynthesis. In terms of biological role, sulfotransferase; part of the gene cluster that mediates the biosynthesis of pyrrolopyrazines, secondary metabolites showing insecticidal activity. The role of ppzF within the pathway has still to be determined. The single multifunctional NRPS ppzA is sufficient to produce peramine via condensation of 1-pyrroline-5-carboxylate and arginine, N-methylation of the alpha-amino group of arginine and reduction of the thioester and the cyclization to form an iminium ion resulting in release from the peptide synthetase. Deprotonation of this intermediate and oxidation of the pyrroline ring would give rise to peramine. In Epichloe species that produce only peramine, the peramine synthetase gene is not localized in a gene cluster, in contrast to Metarhizium species that contain additional pyrrolopyrazine biosynthesis genes. The 2-oxoglutarate-Fe(II) type oxidoreductase ppzC hydroxylates peramine to yield the newly identified compound 8-hydroxyperamine whereas ppzD converts L-proline into trans-4-hydroxy-L-proline, a precursor of peramine biosynthesis. In Metarhizium rileyi (strain RCEF 4871) (Nomuraea rileyi), this protein is Sulfotransferase ppzF.